A 198-amino-acid polypeptide reads, in one-letter code: Recombination protein RecR (198 aa).

Residues 57-72 (CSICGNLTDDDPCHIC) form a C4-type zinc finger. Residues 80–175 (TTILVVEDAK…KVTRLARGLA (96 aa)) form the Toprim domain.

It belongs to the RecR family.

Its function is as follows. May play a role in DNA repair. It seems to be involved in an RecBC-independent recombinational process of DNA repair. It may act with RecF and RecO. This chain is Recombination protein RecR, found in Streptococcus pyogenes serotype M5 (strain Manfredo).